The chain runs to 318 residues: Acetyl-coenzyme A carboxylase carboxyl transferase subunit alpha (318 aa).

The CoA carboxyltransferase C-terminal domain maps to K38–A292.

It belongs to the AccA family. In terms of assembly, acetyl-CoA carboxylase is a heterohexamer composed of biotin carboxyl carrier protein (AccB), biotin carboxylase (AccC) and two subunits each of ACCase subunit alpha (AccA) and ACCase subunit beta (AccD).

The protein localises to the cytoplasm. It catalyses the reaction N(6)-carboxybiotinyl-L-lysyl-[protein] + acetyl-CoA = N(6)-biotinyl-L-lysyl-[protein] + malonyl-CoA. Its pathway is lipid metabolism; malonyl-CoA biosynthesis; malonyl-CoA from acetyl-CoA: step 1/1. In terms of biological role, component of the acetyl coenzyme A carboxylase (ACC) complex. First, biotin carboxylase catalyzes the carboxylation of biotin on its carrier protein (BCCP) and then the CO(2) group is transferred by the carboxyltransferase to acetyl-CoA to form malonyl-CoA. This is Acetyl-coenzyme A carboxylase carboxyl transferase subunit alpha from Listeria monocytogenes serotype 4b (strain CLIP80459).